The primary structure comprises 150 residues: 16.9 kDa class I heat shock protein 1 (150 aa).

The interval 1-42 (MSLVRRSNVFDPFSLDLWDPFDSVFRSVVPATSDNDTAAFAN) is important for thermostability under elevated temperature. The region spanning 36–150 (DTAAFANARI…PEVKAIEISG (115 aa)) is the sHSP domain.

It belongs to the small heat shock protein (HSP20) family. As to quaternary structure, forms oligomeric structures.

It is found in the cytoplasm. This Oryza sativa subsp. japonica (Rice) protein is 16.9 kDa class I heat shock protein 1 (HSP16.9A).